A 378-amino-acid polypeptide reads, in one-letter code: UPF0754 membrane protein BT9727_0767 (378 aa).

Transmembrane regions (helical) follow at residues 1 to 21 (MNIWLSMLTTTGLGAIIGGFT) and 357 to 377 (YLGALLGGMIGIVQGLLLLFL).

This sequence belongs to the UPF0754 family.

It is found in the cell membrane. The sequence is that of UPF0754 membrane protein BT9727_0767 from Bacillus thuringiensis subsp. konkukian (strain 97-27).